We begin with the raw amino-acid sequence, 220 residues long: Deoxyribose-phosphate aldolase 1 (220 aa).

The Proton donor/acceptor role is filled by Asp-89. Lys-151 functions as the Schiff-base intermediate with acetaldehyde in the catalytic mechanism. Lys-180 (proton donor/acceptor) is an active-site residue.

It belongs to the DeoC/FbaB aldolase family. DeoC type 1 subfamily.

The protein localises to the cytoplasm. It catalyses the reaction 2-deoxy-D-ribose 5-phosphate = D-glyceraldehyde 3-phosphate + acetaldehyde. It functions in the pathway carbohydrate degradation; 2-deoxy-D-ribose 1-phosphate degradation; D-glyceraldehyde 3-phosphate and acetaldehyde from 2-deoxy-alpha-D-ribose 1-phosphate: step 2/2. Functionally, catalyzes a reversible aldol reaction between acetaldehyde and D-glyceraldehyde 3-phosphate to generate 2-deoxy-D-ribose 5-phosphate. This Staphylococcus aureus (strain bovine RF122 / ET3-1) protein is Deoxyribose-phosphate aldolase 1.